The primary structure comprises 496 residues: Genome polyprotein (496 aa).

Residues 1–447 are Extracellular-facing; it reads SRCTHLENRD…HTVLGGAFNS (447 aa). Disulfide bonds link cysteine 3–cysteine 30, cysteine 60–cysteine 116, cysteine 60–cysteine 121, cysteine 74–cysteine 105, cysteine 92–cysteine 116, and cysteine 92–cysteine 121. The fusion peptide stretch occupies residues 98–111; that stretch reads DRGWGNHCGLFGKG. N-linked (GlcNAc...) asparagine; by host glycosylation occurs at asparagine 154. 2 cysteine pairs are disulfide-bonded: cysteine 186/cysteine 290 and cysteine 307/cysteine 338. Residues 448-468 traverse the membrane as a helical segment; that stretch reads IFGGVGFLPKLLMGVALAWLG. Over 469–479 the chain is Cytoplasmic; the sequence is LNTRNPTMSMS. Residues 480–496 form a helical membrane-spanning segment; it reads FLLTGGLVLAMTLGVGA.

Homodimer; in the endoplasmic reticulum and Golgi. N-glycosylated.

The protein resides in the virion membrane. Its subcellular location is the host endoplasmic reticulum membrane. Its function is as follows. Binds to host cell surface receptor and mediates fusion between viral and cellular membranes. Envelope protein is synthesized in the endoplasmic reticulum in the form of heterodimer with protein prM. They play a role in virion budding in the ER, and the newly formed immature particle is covered with 60 spikes composed of heterodimer between precursor prM and envelope protein E. The virion is transported to the Golgi apparatus where the low pH causes dissociation of PrM-E heterodimers and formation of E homodimers. prM-E cleavage is ineficient, and many virions are only partially matured. These uncleaved prM would play a role in immune evasion. This chain is Genome polyprotein, found in Bos taurus (Bovine).